A 376-amino-acid polypeptide reads, in one-letter code: 28S rRNA (uridine-N(3))-methyltransferase (376 aa).

Disordered stretches follow at residues 1–33 (MAERGRKRPCGPGEHGQRIEWRKWKQQKKEEKK) and 49–71 (AQEEQAKRLEEEEAAAEKEDRGR). Positions 15–33 (HGQRIEWRKWKQQKKEEKK) are enriched in basic and acidic residues. Residues Thr-289, Arg-292, Gly-312, Asn-341, and Thr-342 each contribute to the S-adenosyl-L-homocysteine site. Residues Arg-292, Gly-312, Asn-341, and Thr-342 each contribute to the S-adenosyl-L-methionine site.

This sequence belongs to the class IV-like SAM-binding methyltransferase superfamily. As to quaternary structure, interacts with INCA1.

The protein resides in the cytoplasm. Its subcellular location is the cytoskeleton. The protein localises to the spindle. It localises to the chromosome. It is found in the centromere. The protein resides in the kinetochore. Its subcellular location is the microtubule organizing center. The protein localises to the centrosome. The enzyme catalyses uridine in 28S rRNA + S-adenosyl-L-methionine = N(3)-methyluridine in 28S rRNA + S-adenosyl-L-homocysteine + H(+). Functionally, S-adenosyl-L-methionine-dependent methyltransferase that specifically methylates the N3 position of a uridine in 28S rRNA. Required for association of the centrosomes with the poles of the bipolar mitotic spindle during metaphase. Also involved in chromosome alignment. May promote centrosome maturation probably by recruiting A-kinase anchor protein AKAP9 to centrosomes in early mitosis. Binds specifically to miRNA MIR145 hairpin, regulates MIR145 expression at a postranscriptional level. The polypeptide is 28S rRNA (uridine-N(3))-methyltransferase (Homo sapiens (Human)).